Reading from the N-terminus, the 49-residue chain is Large ribosomal subunit protein bL33 (49 aa).

It belongs to the bacterial ribosomal protein bL33 family.

This is Large ribosomal subunit protein bL33 from Desulfitobacterium hafniense (strain Y51).